Here is a 1412-residue protein sequence, read N- to C-terminus: DNA-directed RNA polymerase subunit beta' (1412 aa).

Zn(2+) contacts are provided by Cys70, Cys72, Cys85, and Cys88. Mg(2+)-binding residues include Asp460, Asp462, and Asp464. Residues Cys819, Cys893, Cys900, and Cys903 each contribute to the Zn(2+) site. The interval 1391–1412 is disordered; sequence AEESFEFGTPETPAAEQQHSGE.

This sequence belongs to the RNA polymerase beta' chain family. The RNAP catalytic core consists of 2 alpha, 1 beta, 1 beta' and 1 omega subunit. When a sigma factor is associated with the core the holoenzyme is formed, which can initiate transcription. It depends on Mg(2+) as a cofactor. Requires Zn(2+) as cofactor.

It catalyses the reaction RNA(n) + a ribonucleoside 5'-triphosphate = RNA(n+1) + diphosphate. Its function is as follows. DNA-dependent RNA polymerase catalyzes the transcription of DNA into RNA using the four ribonucleoside triphosphates as substrates. The sequence is that of DNA-directed RNA polymerase subunit beta' from Paraburkholderia xenovorans (strain LB400).